Reading from the N-terminus, the 399-residue chain is Acetate kinase (399 aa).

Asparagine 9 contacts Mg(2+). Residue lysine 16 coordinates ATP. Arginine 90 lines the substrate pocket. Catalysis depends on aspartate 147, which acts as the Proton donor/acceptor. ATP is bound by residues 207–211 (HLGNG), 281–283 (DFR), and 333–337 (GVGEN). Mg(2+) is bound at residue glutamate 387.

Belongs to the acetokinase family. In terms of assembly, homodimer. Requires Mg(2+) as cofactor. The cofactor is Mn(2+).

The protein localises to the cytoplasm. The enzyme catalyses acetate + ATP = acetyl phosphate + ADP. It functions in the pathway metabolic intermediate biosynthesis; acetyl-CoA biosynthesis; acetyl-CoA from acetate: step 1/2. In terms of biological role, catalyzes the formation of acetyl phosphate from acetate and ATP. Can also catalyze the reverse reaction. In Mycobacterium sp. (strain JLS), this protein is Acetate kinase.